The following is a 394-amino-acid chain: S-adenosylmethionine synthase 2 (394 aa).

Glu-11 is a binding site for Mg(2+). His-17 is an ATP binding site. Glu-45 provides a ligand contact to K(+). Positions 58 and 101 each coordinate L-methionine. ATP-binding positions include 169–171, 237–240, Asp-248, 254–255, Ala-271, Lys-275, and Lys-279; these read DGK, SGRF, and RK. L-methionine is bound at residue Asp-248. Position 279 (Lys-279) interacts with L-methionine.

This sequence belongs to the AdoMet synthase family. In terms of assembly, homotetramer. It depends on Mn(2+) as a cofactor. Requires Mg(2+) as cofactor. Co(2+) serves as cofactor. K(+) is required as a cofactor.

It localises to the cytoplasm. The catalysed reaction is L-methionine + ATP + H2O = S-adenosyl-L-methionine + phosphate + diphosphate. It functions in the pathway amino-acid biosynthesis; S-adenosyl-L-methionine biosynthesis; S-adenosyl-L-methionine from L-methionine: step 1/1. Functionally, catalyzes the formation of S-adenosylmethionine from methionine and ATP. The reaction comprises two steps that are both catalyzed by the same enzyme: formation of S-adenosylmethionine (AdoMet) and triphosphate, and subsequent hydrolysis of the triphosphate. This Oryza sativa subsp. japonica (Rice) protein is S-adenosylmethionine synthase 2 (SAM2).